Here is a 114-residue protein sequence, read N- to C-terminus: Iron-sulfur cluster insertion protein ErpA (114 aa).

Iron-sulfur cluster is bound by residues Cys-42, Cys-106, and Cys-108.

The protein belongs to the HesB/IscA family. Homodimer. Requires iron-sulfur cluster as cofactor.

Required for insertion of 4Fe-4S clusters for at least IspG. This is Iron-sulfur cluster insertion protein ErpA from Proteus mirabilis (strain HI4320).